A 273-amino-acid chain; its full sequence is Putative phosphoenolpyruvate synthase regulatory protein (273 aa).

Residue 154-161 (GVSRSGKT) participates in ADP binding.

This sequence belongs to the pyruvate, phosphate/water dikinase regulatory protein family. PSRP subfamily.

The catalysed reaction is [pyruvate, water dikinase] + ADP = [pyruvate, water dikinase]-phosphate + AMP + H(+). It catalyses the reaction [pyruvate, water dikinase]-phosphate + phosphate + H(+) = [pyruvate, water dikinase] + diphosphate. Its function is as follows. Bifunctional serine/threonine kinase and phosphorylase involved in the regulation of the phosphoenolpyruvate synthase (PEPS) by catalyzing its phosphorylation/dephosphorylation. The polypeptide is Putative phosphoenolpyruvate synthase regulatory protein (Neisseria meningitidis serogroup C (strain 053442)).